A 493-amino-acid polypeptide reads, in one-letter code: Glutamyl-tRNA(Gln) amidotransferase subunit A (493 aa).

Active-site charge relay system residues include Lys78 and Ser158. Ser182 serves as the catalytic Acyl-ester intermediate.

It belongs to the amidase family. GatA subfamily. In terms of assembly, heterotrimer of A, B and C subunits.

The catalysed reaction is L-glutamyl-tRNA(Gln) + L-glutamine + ATP + H2O = L-glutaminyl-tRNA(Gln) + L-glutamate + ADP + phosphate + H(+). Allows the formation of correctly charged Gln-tRNA(Gln) through the transamidation of misacylated Glu-tRNA(Gln) in organisms which lack glutaminyl-tRNA synthetase. The reaction takes place in the presence of glutamine and ATP through an activated gamma-phospho-Glu-tRNA(Gln). This is Glutamyl-tRNA(Gln) amidotransferase subunit A from Rickettsia conorii (strain ATCC VR-613 / Malish 7).